A 53-amino-acid polypeptide reads, in one-letter code: Metallothionein (53 aa).

Belongs to the metallothionein superfamily. Type 14 family.

In terms of biological role, this protein complexes cadmium, zinc and copper. The polypeptide is Metallothionein (Synechococcus sp).